The primary structure comprises 754 residues: 5-methyltetrahydropteroyltriglutamate--homocysteine methyltransferase (754 aa).

5-methyltetrahydropteroyltri-L-glutamate-binding positions include 17–20 and Lys117; that span reads RELK. Residues 431-433 and Glu484 contribute to the L-homocysteine site; that span reads IGS. L-methionine-binding positions include 431 to 433 and Glu484; that span reads IGS. 5-methyltetrahydropteroyltri-L-glutamate is bound by residues 515-516 and Trp561; that span reads RC. Residue Asp599 coordinates L-homocysteine. Asp599 is an L-methionine binding site. 5-methyltetrahydropteroyltri-L-glutamate is bound at residue Glu605. Positions 641, 643, and 665 each coordinate Zn(2+). His694 serves as the catalytic Proton donor. Cys726 is a binding site for Zn(2+).

This sequence belongs to the vitamin-B12 independent methionine synthase family. Zn(2+) is required as a cofactor.

It carries out the reaction 5-methyltetrahydropteroyltri-L-glutamate + L-homocysteine = tetrahydropteroyltri-L-glutamate + L-methionine. Its pathway is amino-acid biosynthesis; L-methionine biosynthesis via de novo pathway; L-methionine from L-homocysteine (MetE route): step 1/1. Catalyzes the transfer of a methyl group from 5-methyltetrahydrofolate to homocysteine resulting in methionine formation. This is 5-methyltetrahydropteroyltriglutamate--homocysteine methyltransferase from Salmonella dublin (strain CT_02021853).